The primary structure comprises 1604 residues: Metabotropic glutamate receptor-like protein R (1604 aa).

An N-terminal signal peptide occupies residues 1–27; it reads MVIKKPFIFIFICFLICLLICIDLTNC. Residues 28–1149 lie on the Extracellular side of the membrane; sequence NTINNNNNNN…TDVSKTKIAK (1122 aa). Residues 38–69 are compositionally biased toward low complexity; that stretch reads NNNNNNNNNNNNNNNNNNNNNNNNNNNNNNDN. Residues 38-72 form a disordered region; the sequence is NNNNNNNNNNNNNNNNNNNNNNNNNNNNNNDNNEN. Residues 98-133 adopt a coiled-coil conformation; sequence DFYINKIKKEIKDREKYKNNIENEILKINSQKKRKK. The tract at residues 213–263 is disordered; the sequence is NNNNNNNNNNNNNNNNNNKNNNNNNNNKNNNNNNNNKNNNNNNNNKNNNKN. Asn-285, Asn-327, Asn-359, Asn-375, Asn-489, Asn-498, Asn-525, Asn-577, Asn-593, Asn-624, Asn-768, Asn-837, Asn-841, Asn-851, Asn-864, Asn-876, Asn-885, Asn-888, Asn-913, Asn-967, Asn-991, Asn-1097, and Asn-1109 each carry an N-linked (GlcNAc...) asparagine glycan. A helical transmembrane segment spans residues 1150 to 1170; it reads IIIGISAIIVSIGVLITAILT. Residues 1171–1184 lie on the Cytoplasmic side of the membrane; the sequence is FIYRKRKIMRYSNP. Residues 1185–1205 traverse the membrane as a helical segment; that stretch reads VFLLIILVGCVCGLVSTFVSF. Residues 1206–1211 are Extracellular-facing; sequence STTSAT. A helical membrane pass occupies residues 1212 to 1232; the sequence is CSIRMVLIPLFFFIITSAIFI. Topologically, residues 1233–1256 are cytoplasmic; the sequence is KQYRVYCLIRGVEELHDMSIENSY. A helical membrane pass occupies residues 1257 to 1277; that stretch reads LLKLQSFILIIPAILIAVSVI. Residues 1278–1304 lie on the Extracellular side of the membrane; the sequence is ATRMHRKYNFDLQKETIQAYCYSKNFY. Residues 1305–1325 traverse the membrane as a helical segment; that stretch reads IIFICLALYEFSILLYGCWIV. Topologically, residues 1326-1340 are cytoplasmic; the sequence is IKCRQYRSFPGSFNE. The chain crosses the membrane as a helical span at residues 1341-1361; that stretch reads FFYIGVLIYVLTVILVVSIPI. At 1362–1372 the chain is on the extracellular side; the sequence is GFALLNSALTD. The chain crosses the membrane as a helical span at residues 1373–1393; it reads FLLYSIPILVLIVAIIGLLFA. The Cytoplasmic portion of the chain corresponds to 1394–1604; sequence PKFYFLFRTD…KSSQNSPLLD (211 aa). The segment at 1457 to 1604 is disordered; sequence TGSNTSDDVS…KSSQNSPLLD (148 aa). 2 stretches are compositionally biased toward low complexity: residues 1471–1527 and 1534–1556; these read FDSP…NKNN and SSSN…GRSS. Positions 1563-1572 are enriched in basic residues; sequence NNKKNRRKNS. Positions 1573-1584 are enriched in polar residues; that stretch reads LRTPILNSLLSP.

Belongs to the G-protein coupled receptor 3 family. GABA-B receptor subfamily.

Its subcellular location is the membrane. In Dictyostelium discoideum (Social amoeba), this protein is Metabotropic glutamate receptor-like protein R (grlR).